Reading from the N-terminus, the 366-residue chain is Cell division protein FtsZ 1 (366 aa).

Residues Gly45–Asn49, Gly132–Gly134, Glu163, Arg167, and Asp210 contribute to the GTP site. The span at Pro344–Glu354 shows a compositional bias: acidic residues. Residues Pro344 to Leu366 are disordered. Residues Glu355–Leu366 are compositionally biased toward low complexity.

It belongs to the FtsZ family. In terms of assembly, homodimer. Polymerizes to form a dynamic ring structure in a strictly GTP-dependent manner. Interacts directly with several other division proteins.

It localises to the cytoplasm. Essential cell division protein that forms a contractile ring structure (Z ring) at the future cell division site. The regulation of the ring assembly controls the timing and the location of cell division. One of the functions of the FtsZ ring is to recruit other cell division proteins to the septum to produce a new cell wall between the dividing cells. Binds GTP and shows GTPase activity. In Pyrococcus woesei, this protein is Cell division protein FtsZ 1.